The sequence spans 693 residues: Putative transmembrane protein ORF68 (693 aa).

Positions 1-17 (MILTIILYTLLFSTCSA) are cleaved as a signal peptide. Residues 18-666 (QSVHTMPEAV…WLTKFGTGGG (649 aa)) are Extracellular-facing. Positions 208 to 256 (SKAANNRMDALEDGMKNINTRVTETNLLLEKLSTEVTGALTQLENEIKM) form a coiled coil. Residues 667-687 (IAGVTIGLLLPILAIVFSCYV) traverse the membrane as a helical segment. Residues 688-693 (FCKRRV) lie on the Cytoplasmic side of the membrane.

It localises to the host membrane. The sequence is that of Putative transmembrane protein ORF68 from Magallana gigas (Pacific oyster).